Here is a 116-residue protein sequence, read N- to C-terminus: Large ribosomal subunit protein uL22 (116 aa).

This sequence belongs to the universal ribosomal protein uL22 family. In terms of assembly, part of the 50S ribosomal subunit.

This protein binds specifically to 23S rRNA; its binding is stimulated by other ribosomal proteins, e.g. L4, L17, and L20. It is important during the early stages of 50S assembly. It makes multiple contacts with different domains of the 23S rRNA in the assembled 50S subunit and ribosome. Its function is as follows. The globular domain of the protein is located near the polypeptide exit tunnel on the outside of the subunit, while an extended beta-hairpin is found that lines the wall of the exit tunnel in the center of the 70S ribosome. This chain is Large ribosomal subunit protein uL22, found in Orientia tsutsugamushi (strain Boryong) (Rickettsia tsutsugamushi).